A 433-amino-acid chain; its full sequence is ATP-dependent protease ATPase subunit HslU (433 aa).

ATP-binding positions include Val-18, 60–65 (GVGKTE), Asp-246, Glu-311, and Arg-383.

The protein belongs to the ClpX chaperone family. HslU subfamily. In terms of assembly, a double ring-shaped homohexamer of HslV is capped on each side by a ring-shaped HslU homohexamer. The assembly of the HslU/HslV complex is dependent on binding of ATP.

The protein localises to the cytoplasm. In terms of biological role, ATPase subunit of a proteasome-like degradation complex; this subunit has chaperone activity. The binding of ATP and its subsequent hydrolysis by HslU are essential for unfolding of protein substrates subsequently hydrolyzed by HslV. HslU recognizes the N-terminal part of its protein substrates and unfolds these before they are guided to HslV for hydrolysis. This Nitrobacter winogradskyi (strain ATCC 25391 / DSM 10237 / CIP 104748 / NCIMB 11846 / Nb-255) protein is ATP-dependent protease ATPase subunit HslU.